Reading from the N-terminus, the 129-residue chain is Glycine cleavage system H protein (129 aa).

In terms of domain architecture, Lipoyl-binding spans Ser24–Met106. Position 65 is an N6-lipoyllysine (Lys65).

Belongs to the GcvH family. In terms of assembly, the glycine cleavage system is composed of four proteins: P, T, L and H. The cofactor is (R)-lipoate.

In terms of biological role, the glycine cleavage system catalyzes the degradation of glycine. The H protein shuttles the methylamine group of glycine from the P protein to the T protein. The protein is Glycine cleavage system H protein of Shewanella sediminis (strain HAW-EB3).